The primary structure comprises 478 residues: Ribulose bisphosphate carboxylase large chain (478 aa).

Residues 1-2 (MS) constitute a propeptide that is removed on maturation. Pro3 carries the post-translational modification N-acetylproline. Position 14 is an N6,N6,N6-trimethyllysine (Lys14). Asn123 and Thr173 together coordinate substrate. Lys175 acts as the Proton acceptor in catalysis. Lys177 is a substrate binding site. The Mg(2+) site is built by Lys201, Asp203, and Glu204. Position 201 is an N6-carboxylysine (Lys201). His294 (proton acceptor) is an active-site residue. 3 residues coordinate substrate: Arg295, His327, and Ser379.

Belongs to the RuBisCO large chain family. Type I subfamily. In terms of assembly, heterohexadecamer of 8 large chains and 8 small chains; disulfide-linked. The disulfide link is formed within the large subunit homodimers. Mg(2+) is required as a cofactor. The disulfide bond which can form in the large chain dimeric partners within the hexadecamer appears to be associated with oxidative stress and protein turnover.

Its subcellular location is the plastid. The protein localises to the chloroplast. The enzyme catalyses 2 (2R)-3-phosphoglycerate + 2 H(+) = D-ribulose 1,5-bisphosphate + CO2 + H2O. It catalyses the reaction D-ribulose 1,5-bisphosphate + O2 = 2-phosphoglycolate + (2R)-3-phosphoglycerate + 2 H(+). In terms of biological role, ruBisCO catalyzes two reactions: the carboxylation of D-ribulose 1,5-bisphosphate, the primary event in carbon dioxide fixation, as well as the oxidative fragmentation of the pentose substrate in the photorespiration process. Both reactions occur simultaneously and in competition at the same active site. This Drimys granadensis protein is Ribulose bisphosphate carboxylase large chain.